A 288-amino-acid chain; its full sequence is Sulfur carrier protein FdhD (288 aa).

Catalysis depends on C122, which acts as the Cysteine persulfide intermediate. Mo-bis(molybdopterin guanine dinucleotide) is bound at residue 268-273; it reads FVRGER.

Belongs to the FdhD family.

It is found in the cytoplasm. In terms of biological role, required for formate dehydrogenase (FDH) activity. Acts as a sulfur carrier protein that transfers sulfur from IscS to the molybdenum cofactor prior to its insertion into FDH. This is Sulfur carrier protein FdhD from Anaeromyxobacter dehalogenans (strain 2CP-C).